Consider the following 74-residue polypeptide: MRAIISLLLISTMVFGVIEAVSVEEGLKIFEGERGGCVGESQQCADWSGPYCCKGYYCTCRYFPKCICVNDNGK.

The N-terminal stretch at 1 to 20 (MRAIISLLLISTMVFGVIEA) is a signal peptide. Positions 21 to 34 (VSVEEGLKIFEGER) are excised as a propeptide. Cystine bridges form between cysteine 37-cysteine 53, cysteine 44-cysteine 58, cysteine 52-cysteine 68, and cysteine 60-cysteine 66. Residue asparagine 72 is modified to Asparagine amide.

Belongs to the neurotoxin 07 (Beta/delta-agtx) family. 03 (aga-4) subfamily. Aga sub-subfamily. In terms of tissue distribution, expressed by the venom gland.

The protein resides in the secreted. Its function is as follows. Insecticidal neurotoxin that modulates the insect Nav channel (DmNaV1/tipE (para/tipE)) in a unique manner, with both the activation and inactivation processes being affected. The voltage dependence of activation is shifted toward more hyperpolarized potentials (analogous to site 4 toxins) and a non-inactivating persistent sodium current is induced (site 3-like action). Interestingly, both effects take place in a voltage-dependent manner, producing a bell-shaped curve between -80 and 0 mV. This Agelena orientalis (Funnel-web spider) protein is U3-agatoxin-Ao1g.